A 154-amino-acid polypeptide reads, in one-letter code: Pro-corazonin (154 aa).

The first 19 residues, 1 to 19, serve as a signal peptide directing secretion; that stretch reads MLRLLLLPLFLFTLSMCMG. At Gln-20 the chain carries Pyrrolidone carboxylic acid. Asparagine amide is present on Asn-30. Positions 70-154 are excised as a propeptide; sequence LERCLSQLQR…SAEPNVFGKH (85 aa).

Belongs to the corazonin family. As to expression, expression is restricted to 24 neurons in the larval CNS (8 in the brain and 16 in the ventral nerve cord) and 12-16 neurons in the pars lateralis of the adult brain.

It is found in the secreted. In terms of biological role, cardioactive peptide. Corazonin is probably involved in the physiological regulation of the heart beat. Clock (Clk) and cycle (cyc) proteins negatively regulate Crz transcription in a cell-specific manner. In Drosophila erecta (Fruit fly), this protein is Pro-corazonin (Crz).